The primary structure comprises 396 residues: MSDTSAKHIDTLLQHLGSAPFNPDTGAAPVNLPSVRASTVRFQSLAKLEDAQRRKAAGERASTYGRMGMDTHAALEQVFAELEGGTHCYLASSGLAGISMVFLSLLSAGEHALVADCAYGPVHELHEAVLSRLGIDVTFFDAKADLASLVRPTTRLIFAEAPGSLLFEMLDMPALARFAKQHDLILATDNTWGSGYIYRPLTLGAQVSVIAGTKYVGGHSDLMLGAVVTNDEAIAKRLNRTQYALGYSVSADDAWLALRGVRTMPVRMAQHARHALEVCEFLQNRPEVVRLYHPAWPADPGHALWQRDCSGSNGMLAVQLGLSPQAARDFVNALTLFGIGFSWGGFESLVQLVTPGELARHQYWQGGSDALVRLHIGLESPADLIADLAQALDRAA.

Lysine 214 is modified (N6-(pyridoxal phosphate)lysine).

Belongs to the trans-sulfuration enzymes family. Homodimer. Requires pyridoxal 5'-phosphate as cofactor.

The protein resides in the cytoplasm. It catalyses the reaction L,L-cystathionine + H2O = L-homocysteine + pyruvate + NH4(+). It carries out the reaction an S-substituted L-cysteine + H2O = a thiol + pyruvate + NH4(+). It participates in amino-acid biosynthesis; L-methionine biosynthesis via de novo pathway; L-homocysteine from L-cystathionine: step 1/1. In terms of biological role, catalyzes the cleavage of cystathionine to homocysteine, pyruvate and ammonia during methionine biosynthesis. Also has cytotoxic activity toward osteogenic, osteosarcoma and tracheal cells, in vitro. The chemical basis for cell toxicity might be the formation and subsequent transfer of sulfane-sulfur to proteins, derived via beta-cystathionase cleavage of L-cystine. The chain is Cystathionine beta-lyase (metC) from Bordetella avium.